A 324-amino-acid chain; its full sequence is Serpentine receptor class gamma-10 (324 aa).

Transmembrane regions (helical) follow at residues 39 to 59 (SSYLIVGAVLNVMIVYTVFHG), 69 to 89 (MLYCADAIVGIYINTAEVIFG), 91 to 111 (IFIYITPLCPIASPYFFTPSI), 128 to 146 (TFSQIFMSFNRMTCVIFLM), 155 to 175 (ILKPVLIITFILPLGVIWKIL), 206 to 226 (LFHFTLCFVLVIIFFVATILG), 246 to 266 (MIMAVQTVTFASIQIYFVFFA), and 279 to 299 (IVSFVFDSLYVFSPIALIVMS).

Belongs to the nematode receptor-like protein srg family.

Its subcellular location is the membrane. This chain is Serpentine receptor class gamma-10 (srg-10), found in Caenorhabditis elegans.